The primary structure comprises 242 residues: Small ribosomal subunit protein uS3 (242 aa).

Residues Ile39 to Glu110 enclose the KH type-2 domain. The interval Thr217–Gly242 is disordered. Positions Gln233 to Gly242 are enriched in basic and acidic residues.

This sequence belongs to the universal ribosomal protein uS3 family. In terms of assembly, part of the 30S ribosomal subunit. Forms a tight complex with proteins S10 and S14.

Functionally, binds the lower part of the 30S subunit head. Binds mRNA in the 70S ribosome, positioning it for translation. This is Small ribosomal subunit protein uS3 from Prochlorococcus marinus (strain MIT 9313).